The sequence spans 77 residues: MKLIIFTGLVPFAIVSLIEAQAENEKACLPQYQVCTDAPGNCCSNLVCDCYGRYKSGTRIGRNCFCLQKGVIYKREN.

The N-terminal stretch at 1-20 is a signal peptide; the sequence is MKLIIFTGLVPFAIVSLIEA. Positions 21 to 26 are excised as a propeptide; it reads QAENEK.

It belongs to the neurotoxin 19 (CSTX) family. 08 (U8-Lctx) subfamily. In terms of processing, contains 4 disulfide bonds. Expressed by the venom gland.

It is found in the secreted. The sequence is that of U8-lycotoxin-Ls1t from Lycosa singoriensis (Wolf spider).